We begin with the raw amino-acid sequence, 251 residues long: uncharacterized protein (251 aa).

Helical transmembrane passes span 22–42 (FLGV…DIVI), 86–106 (FFLS…VILA), 120–140 (LASS…AGIV), 157–177 (LGYF…IPYV), and 205–225 (IVAW…SFLA).

The protein resides in the cell membrane. This is an uncharacterized protein from Mycoplasma pneumoniae (strain ATCC 29342 / M129 / Subtype 1) (Mycoplasmoides pneumoniae).